The sequence spans 310 residues: Ribosomal RNA small subunit methyltransferase H (310 aa).

Residues 33–35 (GGH), Asp-52, Phe-79, Asp-98, and Gln-105 each bind S-adenosyl-L-methionine.

It belongs to the methyltransferase superfamily. RsmH family.

The protein resides in the cytoplasm. The enzyme catalyses cytidine(1402) in 16S rRNA + S-adenosyl-L-methionine = N(4)-methylcytidine(1402) in 16S rRNA + S-adenosyl-L-homocysteine + H(+). Its function is as follows. Specifically methylates the N4 position of cytidine in position 1402 (C1402) of 16S rRNA. The sequence is that of Ribosomal RNA small subunit methyltransferase H from Campylobacter jejuni subsp. jejuni serotype O:6 (strain 81116 / NCTC 11828).